The sequence spans 27 residues: Dermaseptin-S4 (27 aa).

This sequence belongs to the frog skin active peptide (FSAP) family. Dermaseptin subfamily. As to quaternary structure, monomer and oligomer. Forms aggregates in aqueous environments. Expressed by the skin glands.

It localises to the secreted. In terms of biological role, potent antimicrobial peptide with activity against bacteria and protozoa. Also has activity against fungi. Also shows activity against enveloped herpes simplex virus type 1. Probably acts by disturbing membrane functions with its amphipathic structure. Binds to healthy erythrocytes (this binding is receptor independent), and has strong hemolytic activity. Does not bind to P.falciparum infected erythrocytes, but accumulates within the parasite. Kills the parasite, and only at high concentrations has a hemolytic activity on the host cell. In vitro, shows high spermicidal activities. In Phyllomedusa sauvagei (Sauvage's leaf frog), this protein is Dermaseptin-S4.